Reading from the N-terminus, the 650-residue chain is Probable E3 ubiquitin ligase complex SCF subunit scon-2 (650 aa).

Positions Ile-124–Met-170 constitute an F-box domain. The interval Gln-200 to Lys-244 is disordered. Basic and acidic residues predominate over residues Glu-214–Asp-223. WD repeat units follow at residues Gly-292–Asn-320, Gly-332–Asn-360, Ala-372–Asp-400, Gly-411–Asp-441, and Gly-453–Val-488. A disordered region spans residues Asn-482 to Ser-525. Low complexity-rich tracts occupy residues Ser-487–Ser-499 and Gly-507–Ser-525. 3 WD repeats span residues Glu-528–Asp-564, Gly-576–Glu-604, and Gly-616–Ser-644.

The protein belongs to the WD repeat MET30/SCONB/SCON-2 family. As to quaternary structure, component of the SCF(scon-2) E3 ubiquitin ligase complex.

It participates in protein modification; protein ubiquitination. In terms of biological role, component of the SCF(scon-2) E3 ubiquitin ligase complex involved in the regulation of sulfur metabolite repression, probably by mediating the inactivation or degradation of the metR transcription factor. The polypeptide is Probable E3 ubiquitin ligase complex SCF subunit scon-2 (scon-2) (Neurospora crassa (strain ATCC 24698 / 74-OR23-1A / CBS 708.71 / DSM 1257 / FGSC 987)).